A 130-amino-acid chain; its full sequence is Trypsin inhibitor (130 aa).

A disordered region spans residues 27–49; the sequence is LHKQARQSGSGPSPQGPQQRPPL. Over residues 32–49 the composition is skewed to low complexity; it reads RQSGSGPSPQGPQQRPPL.

This sequence belongs to the 2S seed storage albumins family. In terms of assembly, the protein consists of two chains linked by disulfide bonds.

Inhibits trypsin with a Ki of 7 x 10(-6) M. The protein is Trypsin inhibitor of Mutarda arvensis (Charlock mustard).